Consider the following 487-residue polypeptide: ATP synthase subunit beta 1 (487 aa).

Residue 162-169 (GGAGVGKT) coordinates ATP.

Belongs to the ATPase alpha/beta chains family. As to quaternary structure, F-type ATPases have 2 components, CF(1) - the catalytic core - and CF(0) - the membrane proton channel. CF(1) has five subunits: alpha(3), beta(3), gamma(1), delta(1), epsilon(1). CF(0) has three main subunits: a(1), b(2) and c(9-12). The alpha and beta chains form an alternating ring which encloses part of the gamma chain. CF(1) is attached to CF(0) by a central stalk formed by the gamma and epsilon chains, while a peripheral stalk is formed by the delta and b chains.

The protein resides in the cell inner membrane. It carries out the reaction ATP + H2O + 4 H(+)(in) = ADP + phosphate + 5 H(+)(out). In terms of biological role, produces ATP from ADP in the presence of a proton gradient across the membrane. The catalytic sites are hosted primarily by the beta subunits. This chain is ATP synthase subunit beta 1, found in Gluconobacter oxydans (strain 621H) (Gluconobacter suboxydans).